Here is a 251-residue protein sequence, read N- to C-terminus: CDP-diacylglycerol pyrophosphatase (251 aa).

A helical transmembrane segment spans residues 4-24; it reads AGLLFLVMIVIAVVAAGIGYW.

The protein belongs to the Cdh family.

It localises to the cell inner membrane. The enzyme catalyses a CDP-1,2-diacyl-sn-glycerol + H2O = a 1,2-diacyl-sn-glycero-3-phosphate + CMP + 2 H(+). Its pathway is phospholipid metabolism; CDP-diacylglycerol degradation; phosphatidate from CDP-diacylglycerol: step 1/1. This chain is CDP-diacylglycerol pyrophosphatase, found in Escherichia coli O9:H4 (strain HS).